Here is a 1486-residue protein sequence, read N- to C-terminus: Rap guanine nucleotide exchange factor 2 (1486 aa).

2 disordered regions span residues 40 to 59 and 68 to 101; these read HVSS…SSSL and SEAG…SDPL. The span at 83-94 shows a compositional bias: acidic residues; sequence VDSEDDDDEEDI. Position 135–252 (135–252) interacts with a nucleoside 3',5'-cyclic phosphate; sequence AFANMTMSVR…QKVEEEGEIV (118 aa). The 114-residue stretch at 267–380 folds into the N-terminal Ras-GEF domain; the sequence is KGHIVIKGTS…RLLNIACAAK (114 aa). The 84-residue stretch at 385 to 468 folds into the PDZ domain; that stretch reads LMTLTKPARE…LSITVKTNLF (84 aa). Serine 501 is modified (phosphoserine). Positions 606–692 constitute a Ras-associating domain; the sequence is PDQVLRVFKA…GRYYLKNNME (87 aa). Threonine 644 carries the post-translational modification Phosphothreonine. The 228-residue stretch at 717-944 folds into the Ras-GEF domain; it reads STVEVATQLS…SQGSTNATVL (228 aa). Residues serine 806, serine 930, serine 933, and serine 1022 each carry the phosphoserine modification. Residues 1002–1049 are disordered; it reads PATNTLPKNPTDKKPVKSETSPVAPRAGLQPKAQPQPQPPQPPHKLNQ. The segment covering 1035–1044 has biased composition (pro residues); sequence QPQPQPPQPP. A phosphoserine mark is found at serine 1077, serine 1086, serine 1092, serine 1113, serine 1117, serine 1156, and serine 1173. 4 disordered regions span residues 1090 to 1176, 1221 to 1254, 1303 to 1357, and 1391 to 1486; these read EGSL…SVSI, PSTE…SGSH, KYSR…DSSS, and GRYR…VSAV. Composition is skewed to low complexity over residues 1105–1122 and 1138–1159; these read SNTS…QSSP and SDSG…SFDS. Polar residues-rich tracts occupy residues 1244–1254 and 1304–1328; these read GSWTSCSSGSH and YSRQ…SSTG. Positions 1475–1486 are enriched in acidic residues; that stretch reads AEEDEDEQVSAV.

This sequence belongs to the RAPGEF2 family. In terms of assembly, found in a complex, at least composed of KIDINS220, MAGI2, NTRK1 and RAPGEF2; the complex is mainly formed at late endosomes in a neuronal growth factor (NGF)-dependent manner. Interacts (via C-terminal domain) with NEDD4 (via WW domains); this interaction leads to ubiquitination and degradation via the proteasome pathway in a cAMP-independent manner. Interacts with MAGI1 (via PDZ domain). Interacts with ADRB1 (via C-terminal PDZ motif); the interaction is direct. Interacts (via Ras-associating domain) with RAP1A (via GTP-bound active form). Interacts weakly with HRAS (via GDP- and GTP-bound forms). Interacts (via C-terminal domain) with MAGI2 (via PDZ and WW domains). Interacts with CDH1 and TJP1. Interacts with CTNNB1. Ubiquitinated by NEDD4, leading to proteasomal degradation. In terms of processing, phosphorylation by PLK2 promotes its activity.

The protein localises to the cytoplasm. It is found in the perinuclear region. The protein resides in the cell membrane. It localises to the late endosome. Its subcellular location is the cell junction. Functionally, functions as a guanine nucleotide exchange factor (GEF), which activates Rap and Ras family of small GTPases by exchanging bound GDP for free GTP in a cAMP-dependent manner. Serves as a link between cell surface receptors and Rap/Ras GTPases in intracellular signaling cascades. Also acts as an effector for Rap1 by direct association with Rap1-GTP thereby leading to the amplification of Rap1-mediated signaling. Shows weak activity on HRAS. It is controversial whether RAPGEF2 binds cAMP and cGMP or not. Its binding to ligand-activated beta-1 adrenergic receptor ADRB1 leads to the Ras activation through the G(s)-alpha signaling pathway. Involved in the cAMP-induced Ras and Erk1/2 signaling pathway that leads to sustained inhibition of long term melanogenesis by reducing dendrite extension and melanin synthesis. Also provides inhibitory signals for cell proliferation of melanoma cells and promotes their apoptosis in a cAMP-independent nanner. Regulates cAMP-induced neuritogenesis by mediating the Rap1/B-Raf/ERK signaling through a pathway that is independent on both PKA and RAPGEF3/RAPGEF4. Involved in neuron migration and in the formation of the major forebrain fiber connections forming the corpus callosum, the anterior commissure and the hippocampal commissure during brain development. Involved in neuronal growth factor (NGF)-induced sustained activation of Rap1 at late endosomes and in brain-derived neurotrophic factor (BDNF)-induced axon outgrowth of hippocampal neurons. Plays a role in the regulation of embryonic blood vessel formation and in the establishment of basal junction integrity and endothelial barrier function. May be involved in the regulation of the vascular endothelial growth factor receptor KDR and cadherin CDH5 expression at allantois endothelial cell-cell junctions. Binds to cAMP. The protein is Rap guanine nucleotide exchange factor 2 (RAPGEF2) of Bos taurus (Bovine).